Here is a 158-residue protein sequence, read N- to C-terminus: Superoxide dismutase [Cu-Zn] (158 aa).

His-46, His-48, and His-63 together coordinate Cu cation. Cys-57 and Cys-149 are oxidised to a cystine. Zn(2+)-binding residues include His-63, His-71, His-80, and Asp-83. His-120 serves as a coordination point for Cu cation.

This sequence belongs to the Cu-Zn superoxide dismutase family. In terms of assembly, homodimer. Cu cation is required as a cofactor. Zn(2+) serves as cofactor.

It localises to the cytoplasm. It carries out the reaction 2 superoxide + 2 H(+) = H2O2 + O2. Destroys radicals which are normally produced within the cells and which are toxic to biological systems. This Onchocerca volvulus protein is Superoxide dismutase [Cu-Zn] (sod-1).